A 154-amino-acid polypeptide reads, in one-letter code: RxLR effector protein PITG_12737 (154 aa).

An N-terminal signal peptide occupies residues 1–16 (MRVYFILILAVATVSG). The RxLR-dEER signature appears at 42 to 58 (RLLRAELTTDETYPEER).

It belongs to the RxLR effector family.

The protein resides in the secreted. The protein localises to the host nucleus. It localises to the host cytoplasm. Functionally, effector that enhances P.infestans colonization of Nicotiana benthamiana leaves. In Phytophthora infestans (strain T30-4) (Potato late blight agent), this protein is RxLR effector protein PITG_12737.